The sequence spans 384 residues: Odorant receptor 33c (384 aa).

Residues 1–35 (MVIIDSLSFYRPFWICMRLLVPTFFKDSSRPVQLY) are Cytoplasmic-facing. The chain crosses the membrane as a helical span at residues 36-56 (VVLLHILVTLWFPLHLLLHLL). The Extracellular segment spans residues 57–63 (LLPSTAE). A helical membrane pass occupies residues 64–84 (FFKNLTMSLTCVACSLKHVAH). Residues 85–128 (LYHLPQIVEIESLIEQLDTFIASEQEHRYYRDHVHCHARRFTRC) lie on the Cytoplasmic side of the membrane. Residues 129–149 (LYISFGMIYALFLFGVFVQVI) traverse the membrane as a helical segment. At 150-169 (SGNWELLYPAYFPFDLESNR) the chain is on the extracellular side. A helical membrane pass occupies residues 170 to 190 (FLGAVALGYQVFSMLVEGFQG). Topologically, residues 191–251 (LGNDTYTPLT…LVRFHNLVSR (61 aa)) are cytoplasmic. A helical transmembrane segment spans residues 252–272 (TISEVQLVQLGGCGATLCIIV). Residues 273–274 (SY) lie on the Extracellular side of the membrane. The chain crosses the membrane as a helical span at residues 275 to 295 (MLFFVGDTISLVYYLVFFGVV). Residues 296–358 (CVQLFPSCYF…WIIKAGGLIE (63 aa)) lie on the Cytoplasmic side of the membrane. A helical transmembrane segment spans residues 359 to 379 (LNLNAFFATLKMAYSLFAVVV). Residues 380 to 384 (RAKGI) lie on the Extracellular side of the membrane.

This sequence belongs to the insect chemoreceptor superfamily. Heteromeric odorant receptor channel (TC 1.A.69) family. Or2a subfamily. As to quaternary structure, interacts with Orco. Complexes exist early in the endomembrane system in olfactory sensory neurons (OSNs), coupling these complexes to the conserved ciliary trafficking pathway. In terms of tissue distribution, expressed in the antenna and in a subset of 18 olfactory receptor neurons in the maxillary palp.

The protein localises to the cell membrane. In terms of biological role, odorant receptor which mediates acceptance or avoidance behavior, depending on its substrates. The odorant receptor repertoire encodes a large collection of odor stimuli that vary widely in identity, intensity, and duration. May form a complex with Orco to form odorant-sensing units, providing sensitive and prolonged odorant signaling and calcium permeability. The chain is Odorant receptor 33c (Or33c) from Drosophila melanogaster (Fruit fly).